A 238-amino-acid chain; its full sequence is MSQSLIVALDFPGKQEVEQFLHHFEGEELFVKVGMELFYKEGPAIITYLKEKGHKIFLDLKLHDIPNTVKSAMRSLASLDVDMVNVHAAGGSSMMKAAIEGLEEGKQEGKERPICIAVTQLTSTSETMMKKEIGIEKTLEEAVAHYAKLTKESGLDGVVCSTLEVPKLREVCGNEFVTVTPGIRLASDDVNDQVRVATPKRARELGSSYIVVGRSITKAENPLEAYKTVKQQWEGVTV.

Substrate contacts are provided by residues aspartate 10, lysine 32, 59-68 (DLKLHDIPNT), threonine 122, arginine 184, glutamine 193, glycine 213, and arginine 214. Lysine 61 serves as the catalytic Proton donor.

Belongs to the OMP decarboxylase family. Type 1 subfamily. In terms of assembly, homodimer.

The enzyme catalyses orotidine 5'-phosphate + H(+) = UMP + CO2. It participates in pyrimidine metabolism; UMP biosynthesis via de novo pathway; UMP from orotate: step 2/2. Catalyzes the decarboxylation of orotidine 5'-monophosphate (OMP) to uridine 5'-monophosphate (UMP). This chain is Orotidine 5'-phosphate decarboxylase, found in Bacillus mycoides (strain KBAB4) (Bacillus weihenstephanensis).